A 354-amino-acid polypeptide reads, in one-letter code: Methionine import ATP-binding protein MetN (354 aa).

Positions 8–250 constitute an ABC transporter domain; the sequence is LDHIDITFRQ…PKEALTQEFI (243 aa). 42–49 is a binding site for ATP; it reads GYSGAGKS.

Belongs to the ABC transporter superfamily. Methionine importer (TC 3.A.1.24) family. As to quaternary structure, the complex is composed of two ATP-binding proteins (MetN), two transmembrane proteins (MetI) and a solute-binding protein (MetQ).

The protein resides in the cell membrane. It catalyses the reaction L-methionine(out) + ATP + H2O = L-methionine(in) + ADP + phosphate + H(+). The enzyme catalyses D-methionine(out) + ATP + H2O = D-methionine(in) + ADP + phosphate + H(+). In terms of biological role, part of the ABC transporter complex MetNIQ involved in methionine import. Responsible for energy coupling to the transport system. This Streptococcus pyogenes serotype M2 (strain MGAS10270) protein is Methionine import ATP-binding protein MetN.